The sequence spans 292 residues: MPWLQVRLAISPEQAETYEDAFLEVGAVSVTFMDAEDQPIFEPELNTTPLWAHTHLLALFEGGTEAAPLLAHLELLTGSPLPEHHSEVIEDQDWERSWMDGFQPMRFGQRLWIVPSWHAAPEPDAVNLLLDPGLAFGTGTHPTTALCLEWLDGQDLKDCNVLDFGCGSGILAIAALLLGAKEAVGTDIDVQALEASRDNAGRNNIADELFPLYLPEELPQVKADVLVANILAGPLVSLAPQLSGLVKSGGRLALSGILAEQGDEVAAAYAQDFDLDPIANRDGWVRITGRRR.

Residues Thr-144, Gly-165, Asp-187, and Asn-229 each contribute to the S-adenosyl-L-methionine site.

This sequence belongs to the methyltransferase superfamily. PrmA family.

The protein localises to the cytoplasm. It catalyses the reaction L-lysyl-[protein] + 3 S-adenosyl-L-methionine = N(6),N(6),N(6)-trimethyl-L-lysyl-[protein] + 3 S-adenosyl-L-homocysteine + 3 H(+). Its function is as follows. Methylates ribosomal protein L11. In Pseudomonas fluorescens (strain Pf0-1), this protein is Ribosomal protein L11 methyltransferase.